The following is a 321-amino-acid chain: D-alanine--D-alanine ligase (321 aa).

The ATP-grasp domain maps to 121-315 (RSWFLTNNIN…FVNLIEEILK (195 aa)). 148–199 (IKRPYVIKPFTQGSSIGVEVIFEEDDFNFANYDFPYGDEVIIEKYIKGRELQ) contacts ATP. Mg(2+)-binding residues include Glu268, Glu282, and Asn284.

The protein belongs to the D-alanine--D-alanine ligase family. It depends on Mg(2+) as a cofactor. Requires Mn(2+) as cofactor.

It localises to the cytoplasm. It carries out the reaction 2 D-alanine + ATP = D-alanyl-D-alanine + ADP + phosphate + H(+). It functions in the pathway cell wall biogenesis; peptidoglycan biosynthesis. Cell wall formation. The polypeptide is D-alanine--D-alanine ligase (Rickettsia bellii (strain RML369-C)).